The primary structure comprises 187 residues: Aminodeoxychorismate synthase component 2 (187 aa).

Residues 1–187 (MILLIDNYDS…HQLLANFLHR (187 aa)) enclose the Glutamine amidotransferase type-1 domain. Residues C79, H168, and E170 contribute to the active site.

In terms of assembly, monomer. Heterodimer consisting of two non-identical subunits: a glutamine amidotransferase subunit (PabA) and a aminodeoxychorismate synthase subunit (PabB).

It carries out the reaction chorismate + L-glutamine = 4-amino-4-deoxychorismate + L-glutamate. Its pathway is cofactor biosynthesis; tetrahydrofolate biosynthesis; 4-aminobenzoate from chorismate: step 1/2. With respect to regulation, inhibited by 6-diazo-5-oxo-L-norleucine (DON). The inhibition is competitive with glutamine, but uncompetitive with chorismate. Functionally, part of a heterodimeric complex that catalyzes the two-step biosynthesis of 4-amino-4-deoxychorismate (ADC), a precursor of p-aminobenzoate (PABA) and tetrahydrofolate. In the first step, a glutamine amidotransferase (PabA) generates ammonia as a substrate that, along with chorismate, is used in the second step, catalyzed by aminodeoxychorismate synthase (PabB) to produce ADC. PabA converts glutamine into glutamate only in the presence of stoichiometric amounts of PabB. This is Aminodeoxychorismate synthase component 2 from Escherichia coli (strain K12).